The chain runs to 221 residues: FMN-dependent NADH:quinone oxidoreductase 1 (221 aa).

FMN contacts are provided by residues 17 to 19 and 148 to 151; these read SAS and SSGG.

This sequence belongs to the azoreductase type 1 family. In terms of assembly, homodimer. FMN is required as a cofactor.

The enzyme catalyses 2 a quinone + NADH + H(+) = 2 a 1,4-benzosemiquinone + NAD(+). It catalyses the reaction N,N-dimethyl-1,4-phenylenediamine + anthranilate + 2 NAD(+) = 2-(4-dimethylaminophenyl)diazenylbenzoate + 2 NADH + 2 H(+). Quinone reductase that provides resistance to thiol-specific stress caused by electrophilic quinones. Its function is as follows. Also exhibits azoreductase activity. Catalyzes the reductive cleavage of the azo bond in aromatic azo compounds to the corresponding amines. This is FMN-dependent NADH:quinone oxidoreductase 1 from Clostridium acetobutylicum (strain ATCC 824 / DSM 792 / JCM 1419 / IAM 19013 / LMG 5710 / NBRC 13948 / NRRL B-527 / VKM B-1787 / 2291 / W).